We begin with the raw amino-acid sequence, 103 residues long: Pyrimidine/purine nucleoside phosphorylase (103 aa).

It belongs to the nucleoside phosphorylase PpnP family.

The enzyme catalyses a purine D-ribonucleoside + phosphate = a purine nucleobase + alpha-D-ribose 1-phosphate. It carries out the reaction adenosine + phosphate = alpha-D-ribose 1-phosphate + adenine. The catalysed reaction is cytidine + phosphate = cytosine + alpha-D-ribose 1-phosphate. It catalyses the reaction guanosine + phosphate = alpha-D-ribose 1-phosphate + guanine. The enzyme catalyses inosine + phosphate = alpha-D-ribose 1-phosphate + hypoxanthine. It carries out the reaction thymidine + phosphate = 2-deoxy-alpha-D-ribose 1-phosphate + thymine. The catalysed reaction is uridine + phosphate = alpha-D-ribose 1-phosphate + uracil. It catalyses the reaction xanthosine + phosphate = alpha-D-ribose 1-phosphate + xanthine. In terms of biological role, catalyzes the phosphorolysis of diverse nucleosides, yielding D-ribose 1-phosphate and the respective free bases. Can use uridine, adenosine, guanosine, cytidine, thymidine, inosine and xanthosine as substrates. Also catalyzes the reverse reactions. The sequence is that of Pyrimidine/purine nucleoside phosphorylase from Shewanella sp. (strain ANA-3).